Reading from the N-terminus, the 291-residue chain is B3 domain-containing protein At2g16210 (291 aa).

The segment at residues Phe19–Asp114 is a DNA-binding region (TF-B3 1). The segment covering Val149–Ala159 has biased composition (polar residues). Residues Val149–Thr182 are disordered. Residues Ala172–Thr182 show a composition bias toward basic and acidic residues. Residues Ala200–Pro291 constitute a DNA-binding region (TF-B3 2).

It localises to the nucleus. The protein is B3 domain-containing protein At2g16210 of Arabidopsis thaliana (Mouse-ear cress).